The sequence spans 67 residues: LPS-assembly lipoprotein LptM (67 aa).

Positions 1-19 (MKNVFKALTVLLTLFSLTG) are cleaved as a signal peptide. Residue Cys20 is the site of N-palmitoyl cysteine attachment. Cys20 is lipidated: S-diacylglycerol cysteine. The segment at 26–67 (LYFPPADKNAPPPTKPVETQTQSTVPDKNDRATGDGPSQVNY) is disordered. The segment covering 42 to 51 (VETQTQSTVP) has biased composition (polar residues).

Belongs to the LptM family. Interacts with the outer membrane embedded portion of the LPS translocon formed by LptD and LptE (LptDE).

Its subcellular location is the cell outer membrane. Component of the lipopolysaccharide (LPS) transport (Lpt) pathway that promotes efficient assembly of the outer membrane LPS translocon (LptDE) by the BAM complex. Facilitates oxidative maturation of LptD by stabilizing a conformation of the LPS translocon in which LptD can efficiently acquire native disulfide bonds, thereby activating the LPS translocon. This chain is LPS-assembly lipoprotein LptM, found in Escherichia coli O157:H7.